The chain runs to 164 residues: UPF0225 protein Shewmr4_2054 (164 aa).

This sequence belongs to the UPF0225 family.

The chain is UPF0225 protein Shewmr4_2054 from Shewanella sp. (strain MR-4).